Consider the following 103-residue polypeptide: Large ribosomal subunit protein uL23 (103 aa).

The protein belongs to the universal ribosomal protein uL23 family. In terms of assembly, part of the 50S ribosomal subunit. Contacts protein L29, and trigger factor when it is bound to the ribosome.

Its function is as follows. One of the early assembly proteins it binds 23S rRNA. One of the proteins that surrounds the polypeptide exit tunnel on the outside of the ribosome. Forms the main docking site for trigger factor binding to the ribosome. In Zymomonas mobilis subsp. mobilis (strain ATCC 31821 / ZM4 / CP4), this protein is Large ribosomal subunit protein uL23.